A 98-amino-acid polypeptide reads, in one-letter code: Histone H4-like protein type G (98 aa).

Residues 17-21 mediate DNA binding; sequence KCHRK.

The protein belongs to the histone H4 family. In terms of assembly, the nucleosome is a histone octamer containing two molecules each of H2A, H2B, H3 and H4 assembled in one H3-H4 heterotetramer and two H2A-H2B heterodimers. The octamer wraps approximately 147 bp of DNA.

The protein resides in the nucleus. Its subcellular location is the chromosome. Core component of nucleosome. Nucleosomes wrap and compact DNA into chromatin, limiting DNA accessibility to the cellular machineries which require DNA as a template. Histones thereby play a central role in transcription regulation, DNA repair, DNA replication and chromosomal stability. DNA accessibility is regulated via a complex set of post-translational modifications of histones, also called histone code, and nucleosome remodeling. The polypeptide is Histone H4-like protein type G (Homo sapiens (Human)).